A 562-amino-acid chain; its full sequence is Arginine--tRNA ligase (562 aa).

Residues 130 to 140 (ANPTGPLHIGH) carry the 'HIGH' region motif.

This sequence belongs to the class-I aminoacyl-tRNA synthetase family. In terms of assembly, monomer.

The protein localises to the cytoplasm. The catalysed reaction is tRNA(Arg) + L-arginine + ATP = L-arginyl-tRNA(Arg) + AMP + diphosphate. The chain is Arginine--tRNA ligase from Geobacter metallireducens (strain ATCC 53774 / DSM 7210 / GS-15).